A 498-amino-acid chain; its full sequence is tRNA-2-methylthio-N(6)-dimethylallyladenosine synthase (498 aa).

The MTTase N-terminal domain maps to 2–118; it reads PRYSITTFGC…LPGLLGDLAI (117 aa). Positions 11, 47, 81, 163, 167, and 170 each coordinate [4Fe-4S] cluster. The Radical SAM core domain maps to 149–393; the sequence is PRAAPTAFVT…FEESEALLAA (245 aa). The 72-residue stretch at 396–467 folds into the TRAM domain; that stretch reads SALVGTTQEV…KHSLQAELTE (72 aa). The segment at 469 to 498 is disordered; the sequence is ARAAARPRQRGGLEPRPARRSLPVVAAEGG.

It belongs to the methylthiotransferase family. MiaB subfamily. Monomer. The cofactor is [4Fe-4S] cluster.

It localises to the cytoplasm. The catalysed reaction is N(6)-dimethylallyladenosine(37) in tRNA + (sulfur carrier)-SH + AH2 + 2 S-adenosyl-L-methionine = 2-methylsulfanyl-N(6)-dimethylallyladenosine(37) in tRNA + (sulfur carrier)-H + 5'-deoxyadenosine + L-methionine + A + S-adenosyl-L-homocysteine + 2 H(+). Catalyzes the methylthiolation of N6-(dimethylallyl)adenosine (i(6)A), leading to the formation of 2-methylthio-N6-(dimethylallyl)adenosine (ms(2)i(6)A) at position 37 in tRNAs that read codons beginning with uridine. The sequence is that of tRNA-2-methylthio-N(6)-dimethylallyladenosine synthase from Sorangium cellulosum (strain So ce56) (Polyangium cellulosum (strain So ce56)).